The primary structure comprises 446 residues: Serum factor response D (446 aa).

One can recognise an MADS-box domain in the interval 1-61; the sequence is MGRKKIKIQR…PNAKEKYFQY (61 aa). 3 disordered regions span residues 95-195, 210-296, and 319-432; these read KKEK…FNSS, TQEN…CQQV, and CSSP…SNLN. Over residues 112–121 the composition is skewed to basic and acidic residues; it reads SHSEEEDHKS. Residues 133 to 142 are compositionally biased toward basic residues; it reads HHNHHHHHHQ. Composition is skewed to low complexity over residues 143-195 and 216-282; these read YNNN…FNSS and HYNN…NNNN. The segment covering 322–355 has biased composition (polar residues); the sequence is PEDTSPMTSPRTPPFSSTNTNTLQTSPNSQQKSK. Residues 365–432 show a composition bias toward low complexity; sequence NNNQNNNNQN…SPTSSSSNLN (68 aa).

The protein localises to the nucleus. The protein is Serum factor response D (srfD) of Dictyostelium discoideum (Social amoeba).